Consider the following 366-residue polypeptide: 1-deoxy-D-xylulose 5-phosphate reductoisomerase (366 aa).

NADPH contacts are provided by T7, G8, S9, I10, G31, N33, and N111. Residue K112 participates in 1-deoxy-D-xylulose 5-phosphate binding. NADPH is bound at residue E113. D131 is a binding site for Mn(2+). Residues S132, E133, S162, and H185 each coordinate 1-deoxy-D-xylulose 5-phosphate. E133 provides a ligand contact to Mn(2+). An NADPH-binding site is contributed by G191. Residues S198, N203, K204, and E207 each contribute to the 1-deoxy-D-xylulose 5-phosphate site. E207 contributes to the Mn(2+) binding site.

It belongs to the DXR family. Requires Mg(2+) as cofactor. Mn(2+) is required as a cofactor.

It catalyses the reaction 2-C-methyl-D-erythritol 4-phosphate + NADP(+) = 1-deoxy-D-xylulose 5-phosphate + NADPH + H(+). It functions in the pathway isoprenoid biosynthesis; isopentenyl diphosphate biosynthesis via DXP pathway; isopentenyl diphosphate from 1-deoxy-D-xylulose 5-phosphate: step 1/6. Catalyzes the NADPH-dependent rearrangement and reduction of 1-deoxy-D-xylulose-5-phosphate (DXP) to 2-C-methyl-D-erythritol 4-phosphate (MEP). This chain is 1-deoxy-D-xylulose 5-phosphate reductoisomerase, found in Nautilia profundicola (strain ATCC BAA-1463 / DSM 18972 / AmH).